The sequence spans 762 residues: MLALWSISFVLLCSWRLSYAQYEHLGFAIAYQEPEQDLYTPPELPADTPRIQLRLAGEKRKHNEGRVEVFYEGEWGTVCDDDFTIHAAQVICRELGYFEAISWSPSSKYGKGEGRIWFDNVHCKGKEKSLAQCESNGIGVSDCKHSEDVGVVCSDKRIPGFKFVNTLTNNINSLNIQVEDVRIRPILASYRKRIPVTEGYVEVKDGGKWKQICDDEWTQMNSRVICGMFGFPGQKRYNTRVYKMFARRRKPSYWDYTINCTGKEAHLSSCTLGHTLSNSTCEEGTPVVVSCIPGRAFAPTPMTGYKKAFRQEQPLVRLRGGAVVGEGRVEVLKNGEWGTICDDNWNLLAATVVCRELGFGSAKEALSGGQLGQGMGPVHMNEVQCSGFEKSVTECSFNMEKDSEGCSHEEDAGVKCNVPAMGFQQRLRLSGGRNPFEGRVEVLVERNGSLVWGTVCGEGWTTMEAMVVCRQLGLGFASNAFQETWYWPGAVNADAVVMSGVRCAGTEMSLSHCLHHGEYLSCPKGGGRFAAGVSCSETAPDLVLNPQVVEQTTYLEDRPMFMLQCAYEENCLASTSSATPANSPRRLLRFSSQIHNNGQSDFRPKISRENWVWHDCHRHYHSMEVFTHYDLLSTNGTKVAEGHKASFCLEDSECDEGIEKRYECANFGEQGITVGCWDTYRHDIDCQWVDITDVKPGDYIFQIVINPNYEVAESDYTNNIVKCRCRYDGHRIWMYNCHIGGSFSAETEDTFPGLINNQVTHR.

An N-terminal signal peptide occupies residues Met-1–Ala-20. SRCR domains lie at Leu-53–Ser-154, Ile-183–Ile-292, Val-316–Asn-417, and Leu-427–Ser-536. 9 disulfides stabilise this stretch: Cys-79–Cys-143, Cys-92–Cys-153, Cys-123–Cys-133, Cys-213–Cys-281, Cys-226–Cys-291, Cys-260–Cys-270, Cys-341–Cys-406, Cys-354–Cys-416, and Cys-385–Cys-395. Asn-278 is a glycosylation site (N-linked (GlcNAc...) asparagine). A glycan (N-linked (GlcNAc...) asparagine) is linked at Asn-447. Disulfide bonds link Cys-456–Cys-522, Cys-469–Cys-535, and Cys-503–Cys-513. The lysyl-oxidase like stretch occupies residues Pro-540–Ser-742. Positions 541 and 542 each coordinate Ca(2+). 4 cysteine pairs are disulfide-bonded: Cys-565-Cys-616, Cys-571-Cys-686, Cys-648-Cys-664, and Cys-654-Cys-676. His-617, His-619, and His-621 together coordinate Cu cation. Asn-635 carries N-linked (GlcNAc...) asparagine glycosylation. Positions Lys-644–Tyr-680 form a cross-link, lysine tyrosylquinone (Lys-Tyr). Tyr-680 is modified (2',4',5'-topaquinone). Ca(2+) contacts are provided by Glu-713, Asp-715, Asn-718, and Asn-719. A disulfide bridge connects residues Cys-723 and Cys-737.

It belongs to the lysyl oxidase family. It depends on Cu cation as a cofactor. Lysine tyrosylquinone residue is required as a cofactor. Post-translationally, the lysine tyrosylquinone cross-link (LTQ) is generated by condensation of the epsilon-amino group of a lysine with a topaquinone produced by oxidation of tyrosine.

It is found in the secreted. The protein localises to the extracellular space. Its subcellular location is the extracellular matrix. It localises to the basement membrane. The protein resides in the nucleus. It is found in the chromosome. The protein localises to the endoplasmic reticulum. The enzyme catalyses L-lysyl-[protein] + O2 + H2O = (S)-2-amino-6-oxohexanoyl-[protein] + H2O2 + NH4(+). Functionally, mediates the post-translational oxidative deamination of lysine residues on target proteins leading to the formation of deaminated lysine (allysine). Acts as a transcription corepressor and specifically mediates deamination of trimethylated 'Lys-4' of histone H3 (H3K4me3), a specific tag for epigenetic transcriptional activation. Shows no activity against histone H3 when it is trimethylated on 'Lys-9' (H3K9me3) or 'Lys-27' (H3K27me3) or when 'Lys-4' is monomethylated (H3K4me1) or dimethylated (H3K4me2). Also mediates deamination of methylated TAF10, a member of the transcription factor IID (TFIID) complex, which induces release of TAF10 from promoters, leading to inhibition of TFIID-dependent transcription. LOXL2-mediated deamination of TAF10 results in transcriptional repression of genes required for embryonic stem cell pluripotency. Involved in epithelial to mesenchymal transition (EMT) and participates in repression of E-cadherin, probably by mediating deamination of histone H3. When secreted into the extracellular matrix, promotes cross-linking of extracellular matrix proteins by mediating oxidative deamination of peptidyl lysine residues in precursors to fibrous collagen and elastin. Acts as a regulator of sprouting angiogenesis, probably via collagen IV scaffolding. Acts as a regulator of chondrocyte differentiation, probably by regulating expression of factors that control chondrocyte differentiation. Required with loxl2a for correct expression of Sox2 and for neural differentiation. The polypeptide is Lysyl oxidase homolog 2B (loxl2b) (Danio rerio (Zebrafish)).